Here is a 480-residue protein sequence, read N- to C-terminus: Probable GH family 25 lysozyme 3 (480 aa).

Positions 1-20 are cleaved as a signal peptide; it reads MNKLILSILSVLLIVSIASA. The Ch-type lysozyme domain occupies 21 to 231; the sequence is GNGIDISSGT…STTSSSATSS (211 aa). Residues aspartate 25, aspartate 114, and glutamate 116 contribute to the active site. Over residues 219-472 the composition is skewed to low complexity; that stretch reads SGSSTTSSSA…SSGSGNYTSG (254 aa). A disordered region spans residues 219-480; the sequence is SGSSTTSSSA…SGSGNGAFLF (262 aa). 5 N-linked (GlcNAc...) asparagine glycosylation sites follow: asparagine 423, asparagine 428, asparagine 437, asparagine 446, and asparagine 468.

The protein belongs to the glycosyl hydrolase 25 family.

Its subcellular location is the secreted. It catalyses the reaction Hydrolysis of (1-&gt;4)-beta-linkages between N-acetylmuramic acid and N-acetyl-D-glucosamine residues in a peptidoglycan and between N-acetyl-D-glucosamine residues in chitodextrins.. The sequence is that of Probable GH family 25 lysozyme 3 from Dictyostelium discoideum (Social amoeba).